A 326-amino-acid chain; its full sequence is Phosphate acyltransferase (326 aa).

It belongs to the PlsX family. Homodimer. Probably interacts with PlsY.

The protein localises to the cytoplasm. The catalysed reaction is a fatty acyl-[ACP] + phosphate = an acyl phosphate + holo-[ACP]. It functions in the pathway lipid metabolism; phospholipid metabolism. Functionally, catalyzes the reversible formation of acyl-phosphate (acyl-PO(4)) from acyl-[acyl-carrier-protein] (acyl-ACP). This enzyme utilizes acyl-ACP as fatty acyl donor, but not acyl-CoA. The sequence is that of Phosphate acyltransferase from Thermus thermophilus (strain ATCC BAA-163 / DSM 7039 / HB27).